The chain runs to 349 residues: MESYDVIANQPVVIDNGSGVIKAGFAGDQIPKYCFPNYVGRPKHVRVMAGALEGDIFIGPKAEEHRGLLSIRYPMEHGIVKDWNDMERIWQYVYSKDQLQTFSEEHPVLLTEAPLNPRKNRERAAEVFFETFNVPALFISMQAVLSLYATGRTTGVVLDSGDGVTHAVPIYEGFAMPHSIMRIDIAGRDVSRFLRLYLRKEGYDFHSSSEFEIVKAIKERACYLSINPQKDETLETEKAQYYLPDGSTIEIGPSRFRAPELLFRPDLIGEESEGIHEVLVFAIQKSDMDLRRTLFSNIVLSGGSTLFKGWSLPSAPCPRKLPQSCQAQTPREMTRESPFLPIQVLVTGY.

An N-acetylmethionine modification is found at Met-1.

Belongs to the actin family. ARP1 subfamily. In terms of assembly, part of the ACTR1A/ACTB filament around which the dynactin complex is built. The filament contains 8 copies of ACTR1A and 1 ACTB. Interacts with dynein and adapters such as BICD2. Interacts with BCCIP (isoform 2/alpha).

It localises to the cytoplasm. Its subcellular location is the cytoskeleton. The protein localises to the microtubule organizing center. It is found in the centrosome. The protein resides in the cell cortex. Functionally, part of the ACTR1A/ACTB filament around which the dynactin complex is built. The dynactin multiprotein complex activates the molecular motor dynein for ultra-processive transport along microtubules. The protein is Alpha-centractin (ACTR1A) of Sus scrofa (Pig).